We begin with the raw amino-acid sequence, 104 residues long: Guanidinium exporter (104 aa).

Residues 1 to 3 lie on the Cytoplasmic side of the membrane; that stretch reads MSW. Residues 4–26 form a helical membrane-spanning segment; sequence IILFVAGLLEIVWAVGLKYTHGF. Topologically, residues 27–32 are periplasmic; the sequence is TRLTPS. The helical transmembrane segment at 33–50 threads the bilayer; the sequence is IITISAMIVSMGMLSYAM. The Cytoplasmic portion of the chain corresponds to 51-54; sequence KGLP. Residues 55–77 form a helical membrane-spanning segment; the sequence is AGTAYAIWTGIGAVGTAIFGIIV. The Periplasmic portion of the chain corresponds to 78 to 83; it reads FGESAN. Residues 84-103 form a helical membrane-spanning segment; the sequence is IYRLLSLAMIVFGIIGLKLA. Position 104 (Ser-104) is a topological domain, cytoplasmic.

It belongs to the drug/metabolite transporter (DMT) superfamily. Small multidrug resistance (SMR) (TC 2.A.7.1) family. Gdx/SugE subfamily.

The protein localises to the cell inner membrane. Guanidinium ion exporter. Couples guanidinium export to the proton motive force, exchanging one guanidinium ion for two protons. This chain is Guanidinium exporter, found in Proteus vulgaris.